The following is a 263-amino-acid chain: Thiazole synthase (263 aa).

Residue lysine 102 is the Schiff-base intermediate with DXP of the active site. 1-deoxy-D-xylulose 5-phosphate-binding positions include glycine 164, 190–191 (AG), and 212–213 (NT).

The protein belongs to the ThiG family. In terms of assembly, homotetramer. Forms heterodimers with either ThiH or ThiS.

The protein localises to the cytoplasm. The enzyme catalyses [ThiS sulfur-carrier protein]-C-terminal-Gly-aminoethanethioate + 2-iminoacetate + 1-deoxy-D-xylulose 5-phosphate = [ThiS sulfur-carrier protein]-C-terminal Gly-Gly + 2-[(2R,5Z)-2-carboxy-4-methylthiazol-5(2H)-ylidene]ethyl phosphate + 2 H2O + H(+). It participates in cofactor biosynthesis; thiamine diphosphate biosynthesis. Functionally, catalyzes the rearrangement of 1-deoxy-D-xylulose 5-phosphate (DXP) to produce the thiazole phosphate moiety of thiamine. Sulfur is provided by the thiocarboxylate moiety of the carrier protein ThiS. In vitro, sulfur can be provided by H(2)S. This is Thiazole synthase from Helicobacter hepaticus (strain ATCC 51449 / 3B1).